Here is a 295-residue protein sequence, read N- to C-terminus: Protoheme IX farnesyltransferase 2 (295 aa).

The next 9 helical transmembrane spans lie at 9–29, 36–56, 80–100, 108–128, 135–155, 163–183, 209–229, 230–250, and 265–285; these read ITKPGIIFGNVLSVAGGFFLA, LAVFLAAMIGTSLVVASGCVF, LISLKLALVYATVLGVAGVAL, LAALFAVIGFIIYVGFYSLYL, GTLVGSLSGAMPPVIGYVAVT, LTLLVMFSLWQMPHSYAIAIF, ILIYILAFLVATLMLTFSGYA, GMSYLAVAAAMGMYWLYMAWT, and FVFSIFTITALSVMMSLDFKV.

The protein belongs to the UbiA prenyltransferase family. Protoheme IX farnesyltransferase subfamily.

The protein resides in the cell inner membrane. It catalyses the reaction heme b + (2E,6E)-farnesyl diphosphate + H2O = Fe(II)-heme o + diphosphate. It functions in the pathway porphyrin-containing compound metabolism; heme O biosynthesis; heme O from protoheme: step 1/1. Its function is as follows. Converts heme B (protoheme IX) to heme O by substitution of the vinyl group on carbon 2 of heme B porphyrin ring with a hydroxyethyl farnesyl side group. This is Protoheme IX farnesyltransferase 2 from Pseudomonas fluorescens (strain Pf0-1).